A 1145-amino-acid chain; its full sequence is DNA polymerase II large subunit (1145 aa).

The tract at residues 284 to 303 (KSSSESDEDEETDGKPKIKP) is disordered.

It belongs to the archaeal DNA polymerase II family. In terms of assembly, heterodimer of a large subunit and a small subunit.

It catalyses the reaction DNA(n) + a 2'-deoxyribonucleoside 5'-triphosphate = DNA(n+1) + diphosphate. It carries out the reaction Exonucleolytic cleavage in the 3'- to 5'-direction to yield nucleoside 5'-phosphates.. Possesses two activities: a DNA synthesis (polymerase) and an exonucleolytic activity that degrades single-stranded DNA in the 3'- to 5'-direction. Has a template-primer preference which is characteristic of a replicative DNA polymerase. The polypeptide is DNA polymerase II large subunit (Methanococcoides burtonii (strain DSM 6242 / NBRC 107633 / OCM 468 / ACE-M)).